A 143-amino-acid polypeptide reads, in one-letter code: Large ribosomal subunit protein uL13 (143 aa).

This sequence belongs to the universal ribosomal protein uL13 family. In terms of assembly, part of the 50S ribosomal subunit.

In terms of biological role, this protein is one of the early assembly proteins of the 50S ribosomal subunit, although it is not seen to bind rRNA by itself. It is important during the early stages of 50S assembly. This is Large ribosomal subunit protein uL13 from Prochlorococcus marinus (strain MIT 9312).